Consider the following 103-residue polypeptide: Large ribosomal subunit protein eL14 (103 aa).

The protein belongs to the eukaryotic ribosomal protein eL14 family.

This chain is Large ribosomal subunit protein eL14, found in Pyrobaculum arsenaticum (strain DSM 13514 / JCM 11321 / PZ6).